The sequence spans 311 residues: Ribose-phosphate pyrophosphokinase (311 aa).

ATP-binding positions include 37 to 39 (DGE) and 96 to 97 (RQ). 2 residues coordinate Mg(2+): His-130 and Asp-170. Lys-193 is a catalytic residue. D-ribose 5-phosphate-binding positions include Arg-195, Asp-219, and 223–227 (DTAGT).

The protein belongs to the ribose-phosphate pyrophosphokinase family. Class I subfamily. Homohexamer. Mg(2+) serves as cofactor.

It is found in the cytoplasm. The enzyme catalyses D-ribose 5-phosphate + ATP = 5-phospho-alpha-D-ribose 1-diphosphate + AMP + H(+). It participates in metabolic intermediate biosynthesis; 5-phospho-alpha-D-ribose 1-diphosphate biosynthesis; 5-phospho-alpha-D-ribose 1-diphosphate from D-ribose 5-phosphate (route I): step 1/1. In terms of biological role, involved in the biosynthesis of the central metabolite phospho-alpha-D-ribosyl-1-pyrophosphate (PRPP) via the transfer of pyrophosphoryl group from ATP to 1-hydroxyl of ribose-5-phosphate (Rib-5-P). The polypeptide is Ribose-phosphate pyrophosphokinase (Aquifex aeolicus (strain VF5)).